We begin with the raw amino-acid sequence, 837 residues long: Protein translocase subunit SecA 1 (837 aa).

ATP contacts are provided by residues Q85, 103–107 (GEGKT), and D492. The span at 787 to 806 (QEVAKGEAVHPKEDGEEPKR) shows a compositional bias: basic and acidic residues. Residues 787–811 (QEVAKGEAVHPKEDGEEPKRKPVRK) form a disordered region. Zn(2+) is bound by residues C821, C823, C832, and C833.

Belongs to the SecA family. In terms of assembly, monomer and homodimer. Part of the essential Sec protein translocation apparatus which comprises SecA, SecYEG and auxiliary proteins SecDF. Other proteins may also be involved. Requires Zn(2+) as cofactor.

The protein resides in the cell membrane. It is found in the cytoplasm. It carries out the reaction ATP + H2O + cellular proteinSide 1 = ADP + phosphate + cellular proteinSide 2.. Its function is as follows. Part of the Sec protein translocase complex. Interacts with the SecYEG preprotein conducting channel. Has a central role in coupling the hydrolysis of ATP to the transfer of proteins into and across the cell membrane, serving as an ATP-driven molecular motor driving the stepwise translocation of polypeptide chains across the membrane. The protein is Protein translocase subunit SecA 1 of Geobacillus kaustophilus (strain HTA426).